The chain runs to 305 residues: Peroxisome biogenesis factor 2 (305 aa).

Residues 1 to 15 (MAAREESTQSANRVL) are Peroxisomal matrix-facing. A helical membrane pass occupies residues 16 to 42 (RISQLDALELNKALEQLVWSQFTQCFH). Over 43-48 (GFKPGL) the chain is Cytoplasmic. The helical transmembrane segment at 49-74 (LARFEPEVKAFLWLFLWRFTIYSKNA) threads the bilayer. Residues 75-98 (TVGQSVLNIQYKNDSSPNPVYQPP) are Peroxisomal matrix-facing. A helical transmembrane segment spans residues 99-125 (SKNQKLLYAVCTIGGRWLEERCYDLFR). Over 126 to 133 (NRHLASFG) the chain is Cytoplasmic. The chain crosses the membrane as a helical span at residues 134 to 160 (KAKQCMNFVVGLLKLGELMNFLIFLQK). At 161–187 (GKFATLTERLLGIHSVFCKPQSMREVG) the chain is on the peroxisomal matrix side. Residues 188–211 (FEYMNRELLWHGFAEFLVFLLPLI) form a helical membrane-spanning segment. At 212-305 (NIQKLKAKLS…GIEMSEVNAL (94 aa)) the chain is on the cytoplasmic side. Positions 244, 247, 259, 261, 264, 267, 280, and 283 each coordinate Zn(2+). The RING-type zinc-finger motif lies at 244–284 (CALCGEWPTMPHTIGCEHVFCYYCVKSSFLFDMYFTCPKCG).

This sequence belongs to the pex2/pex10/pex12 family. As to quaternary structure, component of the PEX2-PEX10-PEX12 retrotranslocation channel, composed of PEX2, PEX10 and PEX12. In terms of processing, forms intramolecular and intermolecular disulfide bonds in response to reactive oxygen species (ROS), promoting higher stability.

It localises to the peroxisome membrane. The enzyme catalyses [E2 ubiquitin-conjugating enzyme]-S-ubiquitinyl-L-cysteine + [acceptor protein]-L-cysteine = [E2 ubiquitin-conjugating enzyme]-L-cysteine + [acceptor protein]-S-ubiquitinyl-L-cysteine.. It carries out the reaction S-ubiquitinyl-[E2 ubiquitin-conjugating enzyme]-L-cysteine + [acceptor protein]-L-lysine = [E2 ubiquitin-conjugating enzyme]-L-cysteine + N(6)-ubiquitinyl-[acceptor protein]-L-lysine.. It participates in protein modification; protein ubiquitination. In terms of biological role, E3 ubiquitin-protein ligase component of a retrotranslocation channel required for peroxisome organization by mediating export of the PEX5 receptor from peroxisomes to the cytosol, thereby promoting PEX5 recycling. The retrotranslocation channel is composed of PEX2, PEX10 and PEX12; each subunit contributing transmembrane segments that coassemble into an open channel that specifically allows the passage of PEX5 through the peroxisomal membrane. PEX2 also regulates peroxisome organization by acting as a E3 ubiquitin-protein ligase. PEX2 ubiquitinates PEX5 during its passage through the retrotranslocation channel: catalyzes monoubiquitination of PEX5 at 'Cys-11', a modification that acts as a signal for PEX5 extraction into the cytosol. Required for pexophagy in response to starvation by mediating ubiquitination of peroxisomal proteins, such as PEX5 and ABCD3/PMP70. Also involved in the response to reactive oxygen species (ROS) by mediating 'Lys-48'-linked polyubiquitination and subsequent degradation of PNPLA2/ATGL, thereby regulating lipolysis. The sequence is that of Peroxisome biogenesis factor 2 (Pex2) from Rattus norvegicus (Rat).